Consider the following 439-residue polypeptide: 26S proteasome regulatory subunit 4 (439 aa).

Disordered stretches follow at residues 1–48 (MGQN…AMKL) and 82–104 (ERLK…LRGT). Basic and acidic residues-rich tracts occupy residues 12-25 (GEKK…KKYE) and 82-102 (ERLK…DDLR). 225–232 (GPPGTGKT) serves as a coordination point for ATP.

It belongs to the AAA ATPase family. Interacts with PSMD5.

Its subcellular location is the cytoplasm. It is found in the nucleus. Functionally, the 26S proteasome is involved in the ATP-dependent degradation of ubiquitinated proteins. The regulatory (or ATPase) complex confers ATP dependency and substrate specificity to the 26S complex. The protein is 26S proteasome regulatory subunit 4 (Rpt2) of Drosophila melanogaster (Fruit fly).